A 384-amino-acid polypeptide reads, in one-letter code: 1-deoxy-D-xylulose 5-phosphate reductoisomerase (384 aa).

Residues Thr10, Gly11, Ser12, Ile13, Gly36, and Asn123 each coordinate NADPH. Position 124 (Lys124) interacts with 1-deoxy-D-xylulose 5-phosphate. Glu125 is a binding site for NADPH. Asp149 contacts Mn(2+). The 1-deoxy-D-xylulose 5-phosphate site is built by Ser150, Glu151, Ser175, and His198. Glu151 is a binding site for Mn(2+). Residue Gly204 coordinates NADPH. Residues Ser211, Asn216, Lys217, and Glu220 each contribute to the 1-deoxy-D-xylulose 5-phosphate site. Glu220 contributes to the Mn(2+) binding site.

The protein belongs to the DXR family. Requires Mg(2+) as cofactor. The cofactor is Mn(2+).

It catalyses the reaction 2-C-methyl-D-erythritol 4-phosphate + NADP(+) = 1-deoxy-D-xylulose 5-phosphate + NADPH + H(+). The protein operates within isoprenoid biosynthesis; isopentenyl diphosphate biosynthesis via DXP pathway; isopentenyl diphosphate from 1-deoxy-D-xylulose 5-phosphate: step 1/6. In terms of biological role, catalyzes the NADPH-dependent rearrangement and reduction of 1-deoxy-D-xylulose-5-phosphate (DXP) to 2-C-methyl-D-erythritol 4-phosphate (MEP). In Chlorobium phaeovibrioides (strain DSM 265 / 1930) (Prosthecochloris vibrioformis (strain DSM 265)), this protein is 1-deoxy-D-xylulose 5-phosphate reductoisomerase.